Consider the following 491-residue polypeptide: Probable protein phosphatase 2C 6 (491 aa).

Basic and acidic residues predominate over residues 1–16 (MGLCHSKIDKTTRKET). The disordered stretch occupies residues 1–39 (MGLCHSKIDKTTRKETGATSTATTTVERQSSGRLRRPRD). Residues 17–28 (GATSTATTTVER) show a composition bias toward low complexity. The PPM-type phosphatase domain occupies 64–376 (IACLYTQQGK…DDCAVVCLFL (313 aa)). Residues Asp100, Gly101, Asp321, and Asp367 each coordinate Mn(2+). Residues 391–422 (VNHSHEESTESVTITSSKDADKKEEASTETNE) form a disordered region.

This sequence belongs to the PP2C family. Mg(2+) serves as cofactor. The cofactor is Mn(2+).

The catalysed reaction is O-phospho-L-seryl-[protein] + H2O = L-seryl-[protein] + phosphate. It catalyses the reaction O-phospho-L-threonyl-[protein] + H2O = L-threonyl-[protein] + phosphate. The polypeptide is Probable protein phosphatase 2C 6 (Arabidopsis thaliana (Mouse-ear cress)).